Reading from the N-terminus, the 398-residue chain is Phosphoglycerate kinase (398 aa).

Substrate is bound by residues 23-25, Arg-38, 61-64, Arg-120, and Arg-153; these read DLN and HFGR. ATP contacts are provided by residues Lys-203, Glu-325, and 355 to 358; that span reads GGDT.

The protein belongs to the phosphoglycerate kinase family. As to quaternary structure, monomer.

It localises to the cytoplasm. The catalysed reaction is (2R)-3-phosphoglycerate + ATP = (2R)-3-phospho-glyceroyl phosphate + ADP. Its pathway is carbohydrate degradation; glycolysis; pyruvate from D-glyceraldehyde 3-phosphate: step 2/5. This chain is Phosphoglycerate kinase, found in Mesorhizobium japonicum (strain LMG 29417 / CECT 9101 / MAFF 303099) (Mesorhizobium loti (strain MAFF 303099)).